The following is a 108-amino-acid chain: Large ribosomal subunit protein uL24 (108 aa).

It belongs to the universal ribosomal protein uL24 family. In terms of assembly, part of the 50S ribosomal subunit.

Its function is as follows. One of two assembly initiator proteins, it binds directly to the 5'-end of the 23S rRNA, where it nucleates assembly of the 50S subunit. In terms of biological role, one of the proteins that surrounds the polypeptide exit tunnel on the outside of the subunit. This is Large ribosomal subunit protein uL24 from Salinispora tropica (strain ATCC BAA-916 / DSM 44818 / JCM 13857 / NBRC 105044 / CNB-440).